The chain runs to 312 residues: MALPVLFDCDPGHDDAIAIVLALASPELDVKAITSSAGNQTPDKTLRNVLRMLTLLGRNDIPVAGGAIKPLMRDLIIADNVHGESGLDGPALPEPSFAPQTCTAVELMAKTLRESPEPVTIVATGPQTNVALLLNSHPELHRKIARIVIMGGAMGLGNWTPAAEFNIYVDPEAAEIVFQSGIPVVMAGLDVTHKAQIHAEDTERFRATGNPVSTIVAELLDFFLEYHKDEKWGFTGAPLHDPCTIAWLLKPELFTTVERWVGVETQGKYTQGMTVVDYYFLTGNKPNATVMVDIDRQGFVDLLAERLAFYAS.

Histidine 240 is a catalytic residue.

The protein belongs to the IUNH family. RihA subfamily.

In terms of biological role, hydrolyzes cytidine or uridine to ribose and cytosine or uracil, respectively. This Citrobacter koseri (strain ATCC BAA-895 / CDC 4225-83 / SGSC4696) protein is Pyrimidine-specific ribonucleoside hydrolase RihA.